A 104-amino-acid chain; its full sequence is uncharacterized protein (104 aa).

Disordered stretches follow at residues Met1–Pro48 and Gln66–Ser104.

This is an uncharacterized protein from Saccharomyces cerevisiae (strain ATCC 204508 / S288c) (Baker's yeast).